Here is a 241-residue protein sequence, read N- to C-terminus: Proteasome subunit alpha type-5 (241 aa).

The residue at position 1 (methionine 1) is an N-acetylmethionine. Phosphoserine is present on serine 16. Threonine 55 bears the Phosphothreonine mark. Serine 56 and serine 63 each carry phosphoserine. Serine 198 carries an O-linked (GlcNAc) serine glycan.

This sequence belongs to the peptidase T1A family. As to quaternary structure, the 26S proteasome consists of a 20S proteasome core and two 19S regulatory subunits. The 20S proteasome core is a barrel-shaped complex made of 28 subunits that are arranged in four stacked rings. The two outer rings are each formed by seven alpha subunits, and the two inner rings are formed by seven beta subunits. The proteolytic activity is exerted by three beta-subunits PSMB5, PSMB6 and PSMB7. PSMA5 interacts directly with the PSMG1-PSMG2 heterodimer which promotes 20S proteasome assembly.

Its subcellular location is the cytoplasm. It localises to the nucleus. Functionally, component of the 20S core proteasome complex involved in the proteolytic degradation of most intracellular proteins. This complex plays numerous essential roles within the cell by associating with different regulatory particles. Associated with two 19S regulatory particles, forms the 26S proteasome and thus participates in the ATP-dependent degradation of ubiquitinated proteins. The 26S proteasome plays a key role in the maintenance of protein homeostasis by removing misfolded or damaged proteins that could impair cellular functions, and by removing proteins whose functions are no longer required. Associated with the PA200 or PA28, the 20S proteasome mediates ubiquitin-independent protein degradation. This type of proteolysis is required in several pathways including spermatogenesis (20S-PA200 complex) or generation of a subset of MHC class I-presented antigenic peptides (20S-PA28 complex). The polypeptide is Proteasome subunit alpha type-5 (PSMA5) (Bos taurus (Bovine)).